Here is a 670-residue protein sequence, read N- to C-terminus: UvrABC system protein B (670 aa).

One can recognise a Helicase ATP-binding domain in the interval 26–183 (EGLEDGLAHQ…RRLAELQYSR (158 aa)). 39-46 (GVTGSGKT) contributes to the ATP binding site. The Beta-hairpin signature appears at 92–115 (YYDYYQPEAYVPSSDTFIEKDASV). Residues 431–597 (QVDDLLSEIR…GLNKKISDIL (167 aa)) form the Helicase C-terminal domain. One can recognise a UVR domain in the interval 630–665 (ELKIRELESKMLTHAQNLEFEEAAALRDELQALRAQ).

The protein belongs to the UvrB family. Forms a heterotetramer with UvrA during the search for lesions. Interacts with UvrC in an incision complex.

It is found in the cytoplasm. Its function is as follows. The UvrABC repair system catalyzes the recognition and processing of DNA lesions. A damage recognition complex composed of 2 UvrA and 2 UvrB subunits scans DNA for abnormalities. Upon binding of the UvrA(2)B(2) complex to a putative damaged site, the DNA wraps around one UvrB monomer. DNA wrap is dependent on ATP binding by UvrB and probably causes local melting of the DNA helix, facilitating insertion of UvrB beta-hairpin between the DNA strands. Then UvrB probes one DNA strand for the presence of a lesion. If a lesion is found the UvrA subunits dissociate and the UvrB-DNA preincision complex is formed. This complex is subsequently bound by UvrC and the second UvrB is released. If no lesion is found, the DNA wraps around the other UvrB subunit that will check the other stand for damage. The chain is UvrABC system protein B from Pectobacterium carotovorum subsp. carotovorum (strain PC1).